A 244-amino-acid chain; its full sequence is MDDKINKLKEIIKNSNNIVFFGGAGVSTESGIPDFRSANGLFNEKLNITFTPEQLVSHSFFERYPEEFFNFYKAKLIYPNSKPNDAHIALAKLEEMGKLKAIVTQNIDGLHQMAGSKNVFELHGSVLRNYCVDCHTFYDEKFILESKGVPKCTKCGGIVKPDVVLYEEPLDDNVIRGAIDAISKADTLIIGGTSLVVYPAAGLINYYFRGKNLVLINKSSTQADSKADLVINDSIGKVLGKVID.

Residues 1 to 244 (MDDKINKLKE…IGKVLGKVID (244 aa)) enclose the Deacetylase sirtuin-type domain. 8 residues coordinate NAD(+): A24, T28, F35, R36, Q105, I107, D108, and H123. Position 35 (F35) interacts with nicotinamide. Residues I107 and D108 each contribute to the nicotinamide site. Residue H123 is the Proton acceptor of the active site. Zn(2+) contacts are provided by C131, C134, C152, and C155. Positions 193, 194, 217, and 235 each coordinate NAD(+).

This sequence belongs to the sirtuin family. Class U subfamily. Zn(2+) is required as a cofactor.

It is found in the cytoplasm. The enzyme catalyses N(6)-acetyl-L-lysyl-[protein] + NAD(+) + H2O = 2''-O-acetyl-ADP-D-ribose + nicotinamide + L-lysyl-[protein]. In terms of biological role, NAD-dependent protein deacetylase which modulates the activities of several enzymes which are inactive in their acetylated form. This chain is NAD-dependent protein deacetylase, found in Clostridium perfringens (strain 13 / Type A).